Reading from the N-terminus, the 755-residue chain is Photosystem I P700 chlorophyll a apoprotein A1 (755 aa).

Transmembrane regions (helical) follow at residues 72–95 (IFSA…YHGA), 158–181 (LLCT…FHYH), 197–221 (LNHH…HVAI), 297–315 (QAHH…GHMY), 352–375 (WHAQ…QHMY), 391–417 (ISLF…IYMV), 439–461 (AIIS…FYVH), and 536–554 (FMVH…LILL). 2 residues coordinate [4Fe-4S] cluster: Cys578 and Cys587. The next 2 helical transmembrane spans lie at 594-615 (HVFL…HFSW) and 669-691 (LSAY…MFLF). His680 lines the chlorophyll a' pocket. Chlorophyll a-binding residues include Met688 and Tyr696. Trp697 is a binding site for phylloquinone. Residues 729–749 (AVGVAHYLLGGIVTTWAFFLA) form a helical membrane-spanning segment.

The protein belongs to the PsaA/PsaB family. The PsaA/B heterodimer binds the P700 chlorophyll special pair and subsequent electron acceptors. PSI consists of a core antenna complex that captures photons, and an electron transfer chain that converts photonic excitation into a charge separation. The cyanobacterial PSI reaction center is composed of one copy each of PsaA,B,C,D,E,F,I,J,K,L,M and X, and forms trimeric complexes. PSI electron transfer chain: 5 chlorophyll a, 1 chlorophyll a', 2 phylloquinones and 3 4Fe-4S clusters. PSI core antenna: 90 chlorophyll a, 22 carotenoids, 3 phospholipids and 1 galactolipid. P700 is a chlorophyll a/chlorophyll a' dimer, A0 is one or more chlorophyll a, A1 is one or both phylloquinones and FX is a shared 4Fe-4S iron-sulfur center. serves as cofactor.

It is found in the cellular thylakoid membrane. It catalyses the reaction reduced [plastocyanin] + hnu + oxidized [2Fe-2S]-[ferredoxin] = oxidized [plastocyanin] + reduced [2Fe-2S]-[ferredoxin]. Its function is as follows. PsaA and PsaB bind P700, the primary electron donor of photosystem I (PSI), as well as the electron acceptors A0, A1 and FX. PSI is a plastocyanin/cytochrome c6-ferredoxin oxidoreductase, converting photonic excitation into a charge separation, which transfers an electron from the donor P700 chlorophyll pair to the spectroscopically characterized acceptors A0, A1, FX, FA and FB in turn. Oxidized P700 is reduced on the lumenal side of the thylakoid membrane by plastocyanin or cytochrome c6. The protein is Photosystem I P700 chlorophyll a apoprotein A1 of Synechococcus sp. (strain JA-3-3Ab) (Cyanobacteria bacterium Yellowstone A-Prime).